The following is a 94-amino-acid chain: MVKGSNKAADRLAKLEEQRARINAEIQRVRAREQQQERKNETRRKVLVGAMILAKVNSSEWPEDRLMAAMDAYLERDHDRALFGLPPRQKDEPG.

As to quaternary structure, interacts with MobA and MobB to form the relaxosome.

This protein is essential to promote the specific transfer of the plasmid in the presence of conjugative plasmids. The protein is Mobilization protein C (mobC) of Escherichia coli.